The chain runs to 27 residues: Nemertide alpha-8 (27 aa).

3 cysteine pairs are disulfide-bonded: cysteine 2-cysteine 16, cysteine 9-cysteine 20, and cysteine 15-cysteine 26.

Belongs to the nemertide family. As to expression, confined to the epidermis and to the mucus layer.

Its subcellular location is the secreted. Functionally, highly potent toxin against both insect and some mammalian sodium channels (Nav). It potently inhibits inactivation of insect sodium channels of B.germanica (BgNav1) and also delays the inactivation of mammalian Nav with potent activity on Nav1.3/SCN3A and Nav1.4/SCN4A. 1 uM is enough to completely inhibits the inactivation, resulting in sustained non-inactivating currents. In addition, the toxin significantly enhances the recovery from inactivation, and the open state is not required for the toxin to interact with the channel. In vivo, injection into brine shrimp (Artemia salina) stops movement or causes death after 24 hours (EC(50)=0.4 uM). This chain is Nemertide alpha-8, found in Riseriellus occultus (Ribbon worm).